Reading from the N-terminus, the 396-residue chain is Elongation factor Tu (396 aa).

One can recognise a tr-type G domain in the interval 11 to 205 (KPHVNIGTIG…VIDEYIPTPV (195 aa)). The G1 stretch occupies residues 20–27 (GHVDHGKT). 20–27 (GHVDHGKT) lines the GTP pocket. Position 27 (T27) interacts with Mg(2+). Residues 61 to 65 (GITIN) are G2. Residues 82–85 (DAPG) are G3. Residues 82–86 (DAPGH) and 137–140 (NKTD) contribute to the GTP site. Residues 137–140 (NKTD) are G4. The segment at 175–177 (SAL) is G5.

It belongs to the TRAFAC class translation factor GTPase superfamily. Classic translation factor GTPase family. EF-Tu/EF-1A subfamily. Monomer.

The protein resides in the cytoplasm. It catalyses the reaction GTP + H2O = GDP + phosphate + H(+). In terms of biological role, GTP hydrolase that promotes the GTP-dependent binding of aminoacyl-tRNA to the A-site of ribosomes during protein biosynthesis. This chain is Elongation factor Tu, found in Oenococcus oeni (strain ATCC BAA-331 / PSU-1).